Reading from the N-terminus, the 191-residue chain is Outer membrane lipoprotein DolP (191 aa).

An N-terminal signal peptide occupies residues 1–18 (MKAFSPLAVLISALLLQG). Cysteine 19 carries N-palmitoyl cysteine lipidation. Cysteine 19 is lipidated: S-diacylglycerol cysteine. 2 consecutive BON domains span residues 46 to 115 (DDGT…RQGQ) and 124 to 191 (NDTW…TYIK).

Belongs to the lipoprotein DolP family.

The protein localises to the cell outer membrane. Functionally, plays an important role in maintaining outer membrane integrity. Contributes to virulence. The protein is Outer membrane lipoprotein DolP of Salmonella typhimurium (strain LT2 / SGSC1412 / ATCC 700720).